The chain runs to 290 residues: Shikimate dehydrogenase (NADP(+)) (290 aa).

Residues 20–22 (SLS) and threonine 67 each bind shikimate. Lysine 71 acts as the Proton acceptor in catalysis. Residues asparagine 92 and aspartate 107 each contribute to the shikimate site. Residues 132 to 136 (GAGGA) and methionine 228 each bind NADP(+). Tyrosine 230 is a shikimate binding site. Position 251 (glycine 251) interacts with NADP(+).

Belongs to the shikimate dehydrogenase family. As to quaternary structure, homodimer.

The catalysed reaction is shikimate + NADP(+) = 3-dehydroshikimate + NADPH + H(+). It functions in the pathway metabolic intermediate biosynthesis; chorismate biosynthesis; chorismate from D-erythrose 4-phosphate and phosphoenolpyruvate: step 4/7. Its function is as follows. Involved in the biosynthesis of the chorismate, which leads to the biosynthesis of aromatic amino acids. Catalyzes the reversible NADPH linked reduction of 3-dehydroshikimate (DHSA) to yield shikimate (SA). The protein is Shikimate dehydrogenase (NADP(+)) of Citrifermentans bemidjiense (strain ATCC BAA-1014 / DSM 16622 / JCM 12645 / Bem) (Geobacter bemidjiensis).